The primary structure comprises 831 residues: Cadherin-related family member 5 (831 aa).

The signal sequence occupies residues 1–28; the sequence is MGAPALLWPSLLLPWLTVLFGQPPGTLA. Topologically, residues 29-641 are extracellular; that stretch reads QTQVCSVNQT…GQRFSTVDMA (613 aa). Asparagine 36, asparagine 45, asparagine 84, asparagine 135, asparagine 143, asparagine 173, asparagine 201, asparagine 287, asparagine 311, asparagine 408, and asparagine 475 each carry an N-linked (GlcNAc...) asparagine glycan. Cadherin domains follow at residues 53-125, 128-240, 252-357, and 358-459; these read VNIF…DNAP, SFEI…TPWF, IHAQ…PLQF, and SQSL…ERER. Positions 452 to 632 are disordered; the sequence is IQVSERERTP…STGAGEQGDG (181 aa). Positions 473-491 are enriched in polar residues; it reads SSNTTMEAPLTSGTSQRPA. Over residues 505-540 the composition is skewed to low complexity; that stretch reads GGTTLRPPTPASSIPGGSPTLGTSTSPQTTTPGGDS. Residues 541–554 are compositionally biased toward polar residues; it reads AQTPKPGTSHPTAP. Tandem repeats lie at residues 541–571 and 572–602. Residues 541–614 are 3 X 31 AA approximate tandem repeats; the sequence is AQTPKPGTSH…TPKPGTSQST (74 aa). Over residues 555–572 the composition is skewed to low complexity; the sequence is TSRTSTSLMTTSSRSDST. Polar residues-rich tracts occupy residues 573–582 and 589–623; these read QTPKPGTSQP and ASTS…SLPS. One copy of the 3; truncated repeat lies at 605–614; it reads TPKPGTSQST. Residues 642 to 662 traverse the membrane as a helical segment; the sequence is VLGGVLGALLLLALICLVILV. Over 663-831 the chain is Cytoplasmic; that stretch reads HKHYRHRLAC…FGVDADNTYI (169 aa). The tract at residues 663-831 is mediates interaction with USH1C and MYO7B and is required for proper localization to microvilli tips and function in microvilli organization; that stretch reads HKHYRHRLAC…FGVDADNTYI (169 aa). 2 disordered regions span residues 675-774 and 793-831; these read GKAS…GGYK and EPTA…NTYI. Phosphoserine occurs at positions 699, 721, and 725. The span at 716 to 738 shows a compositional bias: pro residues; it reads PLRPPSPMSSSPTPPSSTPPSPQ. The residue at position 728 (threonine 728) is a Phosphothreonine. Residues serine 736 and serine 753 each carry the phosphoserine modification. The span at 761 to 771 shows a compositional bias: basic and acidic residues; it reads LTKERRPEGEG. At threonine 795 the chain carries Phosphothreonine. Residues 797–807 are compositionally biased toward low complexity; the sequence is DVDSASASGSE. Phosphoserine is present on residues serine 802, serine 804, and serine 806.

In terms of assembly, part of the IMAC/intermicrovillar adhesion complex/intermicrovillar tip-link complex composed of ANKS4B, MYO7B, USH1C, CDHR2 and CDHR5. Interacts (via cytoplasmic domain) with USH1C and MYO7B; required for proper localization of CDHR5 to microvilli tips and its function in brush border differentiation. In terms of processing, N- and O-glycosylated.

The protein localises to the apical cell membrane. It is found in the cell projection. Its subcellular location is the microvillus membrane. Intermicrovillar adhesion molecule that forms, via its extracellular domain, calcium-dependent heterophilic complexes with CDHR2 on adjacent microvilli. Thereby, controls the packing of microvilli at the apical membrane of epithelial cells. Through its cytoplasmic domain, interacts with microvillus cytoplasmic proteins to form the intermicrovillar adhesion complex/IMAC. This complex plays a central role in microvilli and epithelial brush border differentiation. The protein is Cadherin-related family member 5 of Mus musculus (Mouse).